Consider the following 388-residue polypeptide: Flavin oxidoreductase hxnT (388 aa).

It belongs to the NADH:flavin oxidoreductase/NADH oxidase family. FMN serves as cofactor.

Functionally, flavin oxidoreductase, part of the hnx cluster involved in the purine degradation. The nicotinate hydroxylase hnxS accepts nicotinate as a substrate and catalyzes the first step of nicotinate catabolism. The major facilitator-type transporters hxnP and hxnZ are probably involved in the uptake of nicotinate-derived metabolites, and the oxidoreductases hxnT and hxnY in the further metabolism of 6-OH nicotinic acid. The polypeptide is Flavin oxidoreductase hxnT (Emericella nidulans (strain FGSC A4 / ATCC 38163 / CBS 112.46 / NRRL 194 / M139) (Aspergillus nidulans)).